The primary structure comprises 159 residues: Transcriptional repressor NrdR (159 aa).

The segment covering 1–11 (MQCPTCQNTDS) has biased composition (polar residues). Residues 1-21 (MQCPTCQNTDSRVLESRSADS) are disordered. A zinc finger spans residues 3 to 34 (CPTCQNTDSRVLESRSADSGKSVRRRRECLNC). An ATP-cone domain is found at 49–139 (VSVLKKDGGR…VYRKFNGVKD (91 aa)).

The protein belongs to the NrdR family. It depends on Zn(2+) as a cofactor.

Its function is as follows. Negatively regulates transcription of bacterial ribonucleotide reductase nrd genes and operons by binding to NrdR-boxes. The protein is Transcriptional repressor NrdR of Prochlorococcus marinus (strain AS9601).